Consider the following 368-residue polypeptide: MNLPIEQYADLLAEKAKNLTALLAPFNPPELEVFESETSHFRMRAEFRVWHDTNEVGENELYHIMFDQETKQRYRVDQFPIANHLINKMMSSLLAEIKGNELLTRKLFQVDYLSTLSGEIAVSMLYHKKLNEEWQAEAAALKARLEHQGFKVQILGRATKQKIALDRDYVEEVLPVDGRNLIYRQVENSFTQPNAKMNIKMLEWARSCTRHSSGDLLELYCGNGNFSIALAENFRKVLATEISKSSVQSAQYNIEQNGIDNLQIIRMSAEEFTQAMNGVREFNRLKGIDLKAYDCNTIFVDPPRAGLDQDTLNMVQAYERILYISCNPHTLADNLQQLTQTHRIERAALFDQFPYTHHVESGVWLIRK.

S-adenosyl-L-methionine is bound by residues Gln192, Tyr220, Asn225, Glu241, and Asp301. Catalysis depends on Cys326, which acts as the Nucleophile. The active-site Proton acceptor is Glu360.

This sequence belongs to the class I-like SAM-binding methyltransferase superfamily. RNA M5U methyltransferase family. TrmA subfamily.

The catalysed reaction is uridine(54) in tRNA + S-adenosyl-L-methionine = 5-methyluridine(54) in tRNA + S-adenosyl-L-homocysteine + H(+). It catalyses the reaction uridine(341) in tmRNA + S-adenosyl-L-methionine = 5-methyluridine(341) in tmRNA + S-adenosyl-L-homocysteine + H(+). In terms of biological role, dual-specificity methyltransferase that catalyzes the formation of 5-methyluridine at position 54 (m5U54) in all tRNAs, and that of position 341 (m5U341) in tmRNA (transfer-mRNA). This chain is tRNA/tmRNA (uracil-C(5))-methyltransferase, found in Actinobacillus pleuropneumoniae serotype 3 (strain JL03).